Here is a 251-residue protein sequence, read N- to C-terminus: Hydroxyacylglutathione hydrolase (251 aa).

Zn(2+)-binding residues include His-53, His-55, Asp-57, His-58, His-110, Asp-127, and His-165.

Belongs to the metallo-beta-lactamase superfamily. Glyoxalase II family. As to quaternary structure, monomer. Zn(2+) serves as cofactor.

It carries out the reaction an S-(2-hydroxyacyl)glutathione + H2O = a 2-hydroxy carboxylate + glutathione + H(+). It functions in the pathway secondary metabolite metabolism; methylglyoxal degradation; (R)-lactate from methylglyoxal: step 2/2. Functionally, thiolesterase that catalyzes the hydrolysis of S-D-lactoyl-glutathione to form glutathione and D-lactic acid. This chain is Hydroxyacylglutathione hydrolase, found in Yersinia pestis.